Here is a 224-residue protein sequence, read N- to C-terminus: MARMKARSAKGKRVAKDTWKSKVWYDIYTPQSFGGDVIGQTPANDPATLIGRISEISLRDLTNEHSKHMTRMYFKVDGVSGNNATSQFVGHDTTREYLKSQVRRRRSKINAIVDVRTKDGFKLRVKALVLTAVRARDHHKTEIRVKMEQIIKDMAKETAFAEFVHAMLMGGLGSKIYGDCKKMFPLKRVEIFKSEVLEFGKVVEAPVEEAAVEAPVEEAAETQE.

Belongs to the eukaryotic ribosomal protein eS1 family.

This is Small ribosomal subunit protein eS1 from Methanococcus maripaludis (strain C7 / ATCC BAA-1331).